Consider the following 332-residue polypeptide: L-lactate dehydrogenase A chain (332 aa).

N-acetylalanine is present on alanine 2. An N6-acetyllysine; alternate modification is found at lysine 5. At lysine 5 the chain carries N6-succinyllysine; alternate. Lysine 14 carries the post-translational modification N6-acetyllysine. Threonine 18 carries the post-translational modification Phosphothreonine. NAD(+) is bound at residue 29 to 57 (GAVGMACAISILMKDLADELALVDVIEDK). Lysine 57 bears the N6-acetyllysine; alternate mark. Residue lysine 57 forms a Glycyl lysine isopeptide (Lys-Gly) (interchain with G-Cter in SUMO2); alternate linkage. Lysine 81 is subject to N6-acetyllysine. Residue arginine 99 coordinates NAD(+). Arginine 106 serves as a coordination point for substrate. Lysine 118 bears the N6-acetyllysine; alternate mark. The residue at position 118 (lysine 118) is an N6-succinyllysine; alternate. Lysine 126 carries the post-translational modification N6-acetyllysine. Substrate is bound by residues asparagine 138 and arginine 169. Histidine 193 acts as the Proton acceptor in catalysis. An N6-acetyllysine mark is found at lysine 224 and lysine 232. Tyrosine 239 carries the phosphotyrosine modification. Lysine 243 carries the N6-acetyllysine modification. A substrate-binding site is contributed by threonine 248. Residue threonine 309 is modified to Phosphothreonine. The residue at position 310 (serine 310) is a Phosphoserine. Lysine 318 is modified (N6-acetyllysine; alternate). An N6-succinyllysine; alternate modification is found at lysine 318. Phosphothreonine is present on threonine 322.

Belongs to the LDH/MDH superfamily. LDH family. As to quaternary structure, homotetramer. Interacts with PTEN upstream reading frame protein MP31. ISGylated.

The protein localises to the cytoplasm. It carries out the reaction (S)-lactate + NAD(+) = pyruvate + NADH + H(+). It functions in the pathway fermentation; pyruvate fermentation to lactate; (S)-lactate from pyruvate: step 1/1. Its function is as follows. Interconverts simultaneously and stereospecifically pyruvate and lactate with concomitant interconversion of NADH and NAD(+). The chain is L-lactate dehydrogenase A chain (LDHA) from Pongo abelii (Sumatran orangutan).